The chain runs to 529 residues: MPLDPGCLNGRVMKCLTFFLLLPETLKKSRKSARAQGKVQACYEIVPLALKKKMAAELYPASANTNIANSNAAANAKKNALQLQQAAPPPPQLHNLNNNNIESGNWQSFHPTLRERNALMFNNELMADVHFIVGPAGASKKVPVHKYILAVGSSVFYAMFYGDLAEVKSEIHIPDVEPAAFLILLKYLYSDEIDLEADTVLATLYAAKKYIVPALAKACVNFLETSLEAKNACVLLSQSRLFEEPDLTLRCWEVIDAQAELALKSEGFCEIDLQTLEIIVTRETLNTKEDVVFEAVLNWAEAECKRQGLSITPVNKRNVLGKALYLVRIPTMTLEEFANGAAQSDILTLEETRSIFLWYTAANKPQLEFPLIKRKGLAPQRCHRFQSSAYRSNQWRYRGRCDSIQFAVDKRIFIAGLGLYGSSCGKAEYSVKIELKRQGAVLAQNLTKFVSDGSSNTFSVWFEHPVQVEQDTFYTVSAILDGNELSYFGQEGMTEVQCGKVTFQFQCSSDSTNGTGVQGGQIPELIFYA.

Residues 127 to 197 (ADVHFIVGPA…LYSDEIDLEA (71 aa)) form the BTB domain.

As to quaternary structure, homodimer and heterodimer. Interacts with cul3 via the BTB domain.

The protein localises to the cytoplasm. Its function is as follows. Adapter protein for the cul3 E3 ubiquitin-protein ligase complex. Involved in late neuronal development and muscle formation. The protein is BTB/POZ domain-containing protein 6 (btbd6) of Xenopus tropicalis (Western clawed frog).